We begin with the raw amino-acid sequence, 813 residues long: Leucine--tRNA ligase (813 aa).

The 'HIGH' region motif lies at 40-51; that stretch reads SYPSGSKLHAGH. The 'KMSKS' region motif lies at 572–576; it reads KMSKS. ATP is bound at residue Lys-575.

Belongs to the class-I aminoacyl-tRNA synthetase family.

Its subcellular location is the cytoplasm. The catalysed reaction is tRNA(Leu) + L-leucine + ATP = L-leucyl-tRNA(Leu) + AMP + diphosphate. The sequence is that of Leucine--tRNA ligase from Clostridium botulinum (strain ATCC 19397 / Type A).